A 450-amino-acid chain; its full sequence is Carbamoyl phosphate synthase arginine-specific small chain (450 aa).

The N-terminal 29 residues, 1–29, are a transit peptide targeting the mitochondrion; it reads MFAARLFKAMPARASAFPSVNASIQSRFM. The Glutamine amidotransferase type-1 domain occupies 220-407; sequence HVAVIDCGVK…LDSVRKYKAS (188 aa). The active-site Nucleophile is cysteine 296. Active-site residues include histidine 380 and glutamate 382.

Belongs to the CarA family. Heterodimer composed of 2 chains; the small (or glutamine) chain promotes the hydrolysis of glutamine to ammonia, which is used by the large (or ammonia) chain to synthesize carbamoyl phosphate.

The protein resides in the mitochondrion matrix. It carries out the reaction hydrogencarbonate + L-glutamine + 2 ATP + H2O = carbamoyl phosphate + L-glutamate + 2 ADP + phosphate + 2 H(+). The enzyme catalyses L-glutamine + H2O = L-glutamate + NH4(+). It functions in the pathway amino-acid biosynthesis; L-arginine biosynthesis; carbamoyl phosphate from bicarbonate: step 1/1. Its function is as follows. Small subunit of the arginine-specific carbamoyl phosphate synthase (CPSase). CPSase catalyzes the formation of carbamoyl phosphate from the ammonia moiety of glutamine, carbonate, and phosphate donated by ATP, the first step of the arginine biosynthetic pathway. The small subunit (glutamine amidotransferase) binds and cleaves glutamine to supply the large subunit with the substrate ammonia. This is Carbamoyl phosphate synthase arginine-specific small chain (cpa1) from Aspergillus oryzae (strain ATCC 42149 / RIB 40) (Yellow koji mold).